Here is a 67-residue protein sequence, read N- to C-terminus: DNA-directed RNA polymerase subunit omega (67 aa).

This sequence belongs to the RNA polymerase subunit omega family. As to quaternary structure, the RNAP catalytic core consists of 2 alpha, 1 beta, 1 beta' and 1 omega subunit. When a sigma factor is associated with the core the holoenzyme is formed, which can initiate transcription.

The enzyme catalyses RNA(n) + a ribonucleoside 5'-triphosphate = RNA(n+1) + diphosphate. In terms of biological role, promotes RNA polymerase assembly. Latches the N- and C-terminal regions of the beta' subunit thereby facilitating its interaction with the beta and alpha subunits. The chain is DNA-directed RNA polymerase subunit omega from Dictyoglomus turgidum (strain DSM 6724 / Z-1310).